The following is a 138-amino-acid chain: ATP synthase epsilon chain (138 aa).

It belongs to the ATPase epsilon chain family. In terms of assembly, F-type ATPases have 2 components, CF(1) - the catalytic core - and CF(0) - the membrane proton channel. CF(1) has five subunits: alpha(3), beta(3), gamma(1), delta(1), epsilon(1). CF(0) has three main subunits: a, b and c.

It localises to the cell membrane. Produces ATP from ADP in the presence of a proton gradient across the membrane. In Streptococcus mutans serotype c (strain ATCC 700610 / UA159), this protein is ATP synthase epsilon chain (atpC).